We begin with the raw amino-acid sequence, 437 residues long: MTHYHFVGIKGSGMSSLAQIMHDLGHEVQGSDIESYVFTEVALRNKGIKILPFDANNITKEMVVIQGNAFPDNHEEIVRAHELKLDIIKYHDFLGHVINQYTSVAVTGAHGKTSTTGLLSHVMNGDKKTSFLIGDGTGMGLPGSDYFAFEACEYRRHFLSYHPDYAIMTNIDFDHPDYFKNIDDVYDAFQHMALNVKKGIIAWGDDEYLRKLDVDIPVYYYGFKETDDIYAKNIQITEKGTQFDVYIKGEFYDQFLSPQYGNHNILNALAVIAISYLEDMNVENIKEALITFGGVKRRFNETKVSNQVIVDDYAHHPREISATIETARKKYPQKDVVAVFQPHTFSRTQAFLNEFAESLSKADQVFLCEIFGSIRENTGDLTIEDLINRIDGSTLIDENSIDVLEKFDNAVILFMGAGDIQKLLKAYFEKLGVKNDF.

An ATP-binding site is contributed by 108 to 114 (GAHGKTS).

Belongs to the MurCDEF family.

Its subcellular location is the cytoplasm. The catalysed reaction is UDP-N-acetyl-alpha-D-muramate + L-alanine + ATP = UDP-N-acetyl-alpha-D-muramoyl-L-alanine + ADP + phosphate + H(+). It participates in cell wall biogenesis; peptidoglycan biosynthesis. In terms of biological role, cell wall formation. The protein is UDP-N-acetylmuramate--L-alanine ligase of Staphylococcus epidermidis (strain ATCC 12228 / FDA PCI 1200).